The chain runs to 70 residues: MPGIKVREGDAFDEAYRRFKKQTDRNLVVTECRARRFFESKTEKRKKQKISAKKKVLKRLYMLRRYESRL.

Belongs to the bacterial ribosomal protein bS21 family.

The protein is Small ribosomal subunit protein bS21 of Helicobacter pylori (strain P12).